The sequence spans 1477 residues: MMRNVQSFYFLFLLIVLNFHVVLSAVCIGQRATTTIWLNQNGDCQDVGFCQYLQNCTCWHGNLVVKSTKYYDEENFKPYFPKLREITGYLLISLCTLKFFHLFPGLTVIRGGDLILNYALVIYYNEIKEVYFPSLTAILNGGVHIGRNHRLCYVNTIRWKSIIKDIHQTGQYGIYLESNKLNCDLGCLKGHCHPAPGHDGDPKAQYCWGPGPKKQQNKAQCQRFCNTQCGPEGCLDGSDHICCHHECLGGCSAINSTNTCHACRKYRIKSTGQCVSKCPRKQYLVDKFLCQESCPYWSINSTEYHHYLWQGECVTKCPVNYISNNQTKKCEKCKSGMKCNTVCKYQDVMADGTLYNGALIRVPSDISKKGLVGCSVFEGSLTFQLQEGTGKAEDSLNELKSLKVLKGHLKIQKSSLKSLNFLSSLEVIETPQNALLHNKYVMAVYENSQLSELWPGNESIIVSDGGIFFQYNPRLCPLHIRNLQDRIHYKNGSKVTGEVSLQNNGHKVLCDTQMLVMHVEEFIPPDLNMETDMTAIECNSFKCVKVTWNFTMTSAYNNILFYAIYFKELQSNQEAVVQLDNECQNNDDWNVITVDIPKIESLEQSLFLQSKIISKLTPYTRYAFYIKEIVSKGEERSSHIHYINISQDLPSEPLGVEASFLSENKILLKWRAPSKPNGIITAFKIYYNKPDYSFWEEQKVLDWCSRDASRDKNAKDVAGYPVNKENYNQYCNISCVCDEEKENSKAIKADREAHNFNVEFQTELMRVLFTKNKFSYRNKNKSPPKIDFSKNISLILSNKILTSTSTTVTQAKIEIIEEPKVTVNGNIFSYVISGLDYFEDYELKVCGCTVVGCRRPSSTINLDCGIVQARTGVNLTADNLDSKMVRVQVQLDSYNISWIAPHKPNAVILKYEISIRYALDKDALVICRPGYLPTYIIRKSRFGNYVAKIRAISPAGNGSWTEEIHFKVAELSVTKNNNQLIIGIISAVSAVIVALLVFILLYMFLHRKLEKDVQGVLYASVNPEYMNSKEVYIPDEWELNREKIELIRELGQGSFGMVFEGIAHGIGDHAELRVAVKTTNENASIHDRIQILQEASIMKAFNCNHVVKLIGVVSQGQPTFVVMELMGRGDLKSYLKERRPDDGGIPLMRQEIYQMVAEIADGMAYLAARKFVHCDLAARNCMVASDFTVKIGDFGMARDIYERNYYRKDGKSLLPIRWMAPESLKDGIFSTASDVWSFGVVLWEICTLASQPYQGKTNEQVLNFVLSNGHLDYPEGCDYQLREFMSLCWHRDPKMRPSFLEIVHVLENEVDDDFVMVSFYHEMKRKALEDIYMKSESYIKSDAYTMSDGYTKGDGNMQNMLSRSQNRKSAIEKSKERLSISSLDSGTYVEKYDANDTPEEIPKKKKRPRSKRNSAVDSNACETKPMLRVESLYDNHDAFSENMQYGDTPVGKSDLMHPETNRELRLSEIFYGKPIPV.

A signal peptide spans 1–24 (MMRNVQSFYFLFLLIVLNFHVVLS). Topologically, residues 25-980 (AVCIGQRATT…LSVTKNNNQL (956 aa)) are extracellular. N-linked (GlcNAc...) asparagine glycosylation is found at Asn-55, Asn-255, Asn-300, Asn-325, Asn-457, Asn-491, Asn-549, Asn-644, Asn-732, Asn-791, Asn-874, Asn-895, and Asn-957. Fibronectin type-III domains lie at 652 to 750 (EPLG…IKAD) and 780 to 869 (NKSP…IVQA). The Fibronectin type-III 3 domain occupies 880–971 (LDSKMVRVQV…EEIHFKVAEL (92 aa)). A helical membrane pass occupies residues 981-1001 (IIGIISAVSAVIVALLVFILL). Residues 1002-1477 (YMFLHRKLEK…EIFYGKPIPV (476 aa)) lie on the Cytoplasmic side of the membrane. Residues 1044–1315 (IELIRELGQG…LENEVDDDFV (272 aa)) form the Protein kinase domain. Residues 1050–1058 (LGQGSFGMV) and Lys-1077 each bind ATP. Asp-1175 serves as the catalytic Proton acceptor. Tyr-1201 carries the phosphotyrosine; by autocatalysis modification. Disordered stretches follow at residues 1350-1376 (YTKG…KSKE) and 1391-1421 (KYDA…SNAC). The segment covering 1356 to 1368 (NMQNMLSRSQNRK) has biased composition (polar residues). The span at 1403–1412 (KKKKRPRSKR) shows a compositional bias: basic residues.

The protein belongs to the protein kinase superfamily. Tyr protein kinase family. Insulin receptor subfamily. The cofactor is Mn(2+). In terms of tissue distribution, expressed in dividing epithelial cells.

It localises to the membrane. The catalysed reaction is L-tyrosyl-[protein] + ATP = O-phospho-L-tyrosyl-[protein] + ADP + H(+). In terms of biological role, this receptor probably binds an insulin related protein and has a tyrosine-protein kinase activity. This Hydra vulgaris (Hydra) protein is Putative insulin-like peptide receptor (HTK7).